A 178-amino-acid chain; its full sequence is MYHQLILLALIGTIMANVIPFSLSNISEEYKEFIPEEVRNFYKGLTAEDKEILRDLASKHATFANEDAALEALKDKSDKLYKNAVELRNFVKAKIDSLKPDAKAFVDEVIARARSLRSDDGQKFDTDKIKQAARDIIAKYQALNEETKEELKVTFPPIAKIISNEKLKRVASTFLQKN.

A signal peptide spans 1 to 16 (MYHQLILLALIGTIMA). 2 coiled-coil regions span residues 67–89 (DAAL…ELRN) and 129–154 (IKQA…LKVT).

It belongs to the fatty-acid and retinol-binding protein (FARBP) family. Not glycosylated.

It is found in the secreted. Its function is as follows. Binds retinol and different fatty acids. This Loa loa (Eye worm) protein is Fatty-acid and retinol-binding protein 1.